Reading from the N-terminus, the 245-residue chain is MKSAIFAAAVLGAAGVSAHGYVSKAILDGKEYTGYLPYEDPYHNPPPERIFRKIAGNGPIEDLTSIDLQCGGWQNSGSAPAPLTAEPVTPGTVQKLQWTTWPDSHKGPIITYMARCPGDCSEYEPGTDAVWFKIAEDGKHDDGSWASDPLINDVPYEFTIPEGLAPGNYIVRHELWALHAAWTYPGAQVYPSCFQVKVVGDGTQQPTNLVAFPGEYTPDTPGVVYDIYQNNEPYPIPGPPVWTPA.

The first 18 residues, 1–18 (MKSAIFAAAVLGAAGVSA), serve as a signal peptide directing secretion. Cu(2+) is bound by residues His-19 and His-105. Cys-116 and Cys-120 are joined by a disulfide. Residues His-179 and Gln-188 each coordinate O2. Tyr-190 serves as a coordination point for Cu(2+).

Belongs to the polysaccharide monooxygenase AA9 family. Requires Cu(2+) as cofactor.

It is found in the secreted. The enzyme catalyses [(1-&gt;4)-beta-D-glucosyl]n+m + reduced acceptor + O2 = 4-dehydro-beta-D-glucosyl-[(1-&gt;4)-beta-D-glucosyl]n-1 + [(1-&gt;4)-beta-D-glucosyl]m + acceptor + H2O.. In terms of biological role, lytic polysaccharide monooxygenase (LPMO) that depolymerizes crystalline and amorphous polysaccharides via the oxidation of scissile alpha- or beta-(1-4)-glycosidic bonds, yielding C1 or C4 oxidation products. Catalysis by LPMOs requires the reduction of the active-site copper from Cu(II) to Cu(I) by a reducing agent and H(2)O(2) or O(2) as a cosubstrate. Active on hemicelluloses, including xylan, glucomannan, and xyloglucan. Has no activity on ivory nut mannan (INM), a linear beta-1,4-linked mannan without substitutions. The protein is AA9 family lytic polysaccharide monooxygenase B of Malbranchea cinnamomea (Thermophilic fungus).